The sequence spans 232 residues: Phosphatidylserine decarboxylase proenzyme (232 aa).

S190 functions as the Schiff-base intermediate with substrate; via pyruvic acid in the catalytic mechanism. A Pyruvic acid (Ser); by autocatalysis modification is found at S190.

The protein belongs to the phosphatidylserine decarboxylase family. PSD-A subfamily. As to quaternary structure, heterodimer of a large membrane-associated beta subunit and a small pyruvoyl-containing alpha subunit. Pyruvate serves as cofactor. Post-translationally, is synthesized initially as an inactive proenzyme. Formation of the active enzyme involves a self-maturation process in which the active site pyruvoyl group is generated from an internal serine residue via an autocatalytic post-translational modification. Two non-identical subunits are generated from the proenzyme in this reaction, and the pyruvate is formed at the N-terminus of the alpha chain, which is derived from the carboxyl end of the proenzyme. The post-translation cleavage follows an unusual pathway, termed non-hydrolytic serinolysis, in which the side chain hydroxyl group of the serine supplies its oxygen atom to form the C-terminus of the beta chain, while the remainder of the serine residue undergoes an oxidative deamination to produce ammonia and the pyruvoyl prosthetic group on the alpha chain.

It is found in the cell membrane. The catalysed reaction is a 1,2-diacyl-sn-glycero-3-phospho-L-serine + H(+) = a 1,2-diacyl-sn-glycero-3-phosphoethanolamine + CO2. It functions in the pathway phospholipid metabolism; phosphatidylethanolamine biosynthesis; phosphatidylethanolamine from CDP-diacylglycerol: step 2/2. Functionally, catalyzes the formation of phosphatidylethanolamine (PtdEtn) from phosphatidylserine (PtdSer). This Beijerinckia indica subsp. indica (strain ATCC 9039 / DSM 1715 / NCIMB 8712) protein is Phosphatidylserine decarboxylase proenzyme.